The primary structure comprises 428 residues: MRMVLTKIVCTIGPRTSSREKIKELIDAGMSIARLNFSHGSREAHLEVIRNIRDSRSGAGRHVSIALDTRGPEVRLRTPEMKDIKVEGGEVLRFSLLSSEKDIWIPGVDLKSLGVDNRVFIDDGAIELRVVNVEEDGFECEVLNSGMIKSNKSMNFPGTDIGDRALGDEDKNDIAFGLENGIDMVFASFVSCRADVEEIRRLVGSKVPVVSKIESCLGMRNLKEIALCSDGVMIARGDLGVEIGLENMFSAQKRILYEVKREGRPVICATQMMESMTLKNAPNRSEISDVGNAVLDGCDCVMLSAESAVGMFPVETVKFMRSICADAERYDMESRKGAGACGVSSYVDGVVICSGTESQIEKIYLSKPETPIIVISESLWILRRFSIYRGIIPVYGKGSEDAEATLRRLGLRGRFLAVGREDVRMVSV.

R34 lines the substrate pocket. 4 residues coordinate K(+): N36, S38, D68, and T69. ATP is bound at residue 36–39 (NFSH). R75 and K152 together coordinate ATP. E214 is a binding site for Mg(2+). G237, D238, and T270 together coordinate substrate. D238 is a Mg(2+) binding site.

It belongs to the pyruvate kinase family. As to quaternary structure, homotetramer. Mg(2+) is required as a cofactor. The cofactor is K(+).

The catalysed reaction is pyruvate + ATP = phosphoenolpyruvate + ADP + H(+). Its pathway is carbohydrate degradation; glycolysis; pyruvate from D-glyceraldehyde 3-phosphate: step 5/5. This chain is Pyruvate kinase (PYK1), found in Encephalitozoon cuniculi (strain GB-M1) (Microsporidian parasite).